Consider the following 861-residue polypeptide: Importin subunit beta-1 (861 aa).

N-acetylserine is present on Ser-2. HEAT repeat units follow at residues 3 to 35 (TAEF…LSND), 37 to 66 (FLQF…LTLK), 90 to 129 (PEAK…ELPH), 134 to 164 (ELMK…YMCE), 177 to 208 (SNNI…LADS), 219 to 255 (EGER…MSLY), 260 to 306 (KPYM…ELAQ), 317 to 362 (FALS…AQNC), 367 to 395 (LEPV…AFGS), 402 to 442 (KVQR…ADSV), 452 to 484 (LPGV…VEQL), 496 to 530 (YPAL…MVEY), 536 to 586 (AETS…VIRK), 592 to 629 (EPVA…AASL), 634 to 669 (EKYL…ISNS), 675 to 713 (RRYS…ASNI), 718 to 764 (IPYL…IVAG), 773 to 812 (FPYV…IAAM), and 819 to 859 (KQFY…KRQL). The Importin N-terminal domain occupies 25 to 106 (SETQLKKLSN…KTNALTALVS (82 aa)). Ser-836 carries the phosphoserine modification.

This sequence belongs to the importin beta family. Importin beta-1 subfamily. In terms of assembly, forms a complex with the importin alpha subunit (SRP1/KAP60). Interacts with Ran (GSP1); interacts specifically with the GTP-bound form of Ran (GTP-Ran), protecting it from GTP hydrolysis and nucleotide exchange. Interacts with nucleoporin NUP1.

The protein localises to the cytoplasm. The protein resides in the nucleus. It localises to the nuclear pore complex. Functionally, importin beta subunit that functions in nuclear protein import through association with the importin alpha subunit, which binds to the classical nuclear localization signal (cNLS) in cargo substrates. Docking of the importin/substrate complex to the nuclear pore complex (NPC) is mediated by importin beta through binding to nucleoporin FxFG repeats and the complex is subsequently translocated through the pore by an energy requiring, Ran-dependent mechanism. At the nucleoplasmic side of the NPC, GTP-Ran binds to importin beta and the three components separate, leading to release of the cargo. Importin alpha and beta are re-exported from the nucleus to the cytoplasm where GTP hydrolysis releases Ran from importin beta. The directionality of nuclear import is thought to be conferred by an asymmetric distribution of the GTP- and GDP-bound forms of Ran between the cytoplasm and nucleus. Mediates the nuclear import of histones H2A and H2B. Mediates the nuclear import of transcription factor GCN4. This is Importin subunit beta-1 from Saccharomyces cerevisiae (strain ATCC 204508 / S288c) (Baker's yeast).